The chain runs to 515 residues: Galactose/methyl galactoside import ATP-binding protein MglA (515 aa).

ABC transporter domains are found at residues 8–243 and 254–499; these read LEMR…VGRE and IPKE…AKYL. 40–47 contacts ATP; the sequence is GENGAGKS.

It belongs to the ABC transporter superfamily. Galactose/methyl galactoside importer (TC 3.A.1.2.3) family. The complex is composed of one ATP-binding protein (MglA), two transmembrane proteins (MglC) and a solute-binding protein (MglB).

The protein localises to the cell membrane. It catalyses the reaction D-galactose(out) + ATP + H2O = D-galactose(in) + ADP + phosphate + H(+). It carries out the reaction methyl beta-D-galactoside(out) + ATP + H2O = methyl beta-D-galactoside(in) + ADP + phosphate + H(+). In terms of biological role, part of the ABC transporter complex MglABC involved in galactose/methyl galactoside import. Responsible for energy coupling to the transport system. This is Galactose/methyl galactoside import ATP-binding protein MglA from Clostridium perfringens (strain SM101 / Type A).